Reading from the N-terminus, the 522-residue chain is MSQDLQKEVASRKTFAIISHPDAGKTTITEQLLLFGGVIRSAGTVKGKKSGKFATSDWMEIEKQRGISVTSSVMQFDYNGSRINILDTPGHSDFSEDTYRTLMAVDSAVMVIDAAKGIEAQTLKLFKVCRMRGIPIFTFINKMDRQGKMPLELLAELEEVLEIESYPMNWPIGMGKELAGLYDRYHRVIEQYRSEEDERFLPLGEDGDLKEAHEIQKSLYYDQALEEIMLLDEAGNDFSRERILAGEQTPVFFGSALTNFGVETFLRTFVDFAPAPSSHESNEGIIEADNPKFSGFIFKIQANMNPAHRDRIAFIRICSGEFERGMNVTLTRTGKSIKLANSTQFMADDRETVNRAVAGDIIGLYDTGNYQIGDTITNGSKKLEFEKLPQFTPELFMRVYAKNVMKQKHFHKGVEQLVQEGAIQLFKTWRTEEYIIGAVGQLQFEVFEHRMRGEYNSEIRMEPIGKKIARWVKEEDADEKLSTARSMLVKDRFDQPLFLFENEFAINWFNDKNPDIELTSLL.

A tr-type G domain is found at 10 to 277 (ASRKTFAIIS…TFVDFAPAPS (268 aa)). GTP contacts are provided by residues 19 to 26 (SHPDAGKT), 87 to 91 (DTPGH), and 141 to 144 (NKMD).

It belongs to the TRAFAC class translation factor GTPase superfamily. Classic translation factor GTPase family. PrfC subfamily.

The protein localises to the cytoplasm. Increases the formation of ribosomal termination complexes and stimulates activities of RF-1 and RF-2. It binds guanine nucleotides and has strong preference for UGA stop codons. It may interact directly with the ribosome. The stimulation of RF-1 and RF-2 is significantly reduced by GTP and GDP, but not by GMP. The polypeptide is Peptide chain release factor 3 (Listeria welshimeri serovar 6b (strain ATCC 35897 / DSM 20650 / CCUG 15529 / CIP 8149 / NCTC 11857 / SLCC 5334 / V8)).